We begin with the raw amino-acid sequence, 969 residues long: MVSKLPQEFRRYLRNRNQLQHVLEETQQALELINLENFFPEENVVEELLSPLTLNRITHILANSPAIIILGQDSKAKAIVVNTLISNDILPVCNGLWRWIRLTYGQTNHISLTLDLEYELVENLQANEKPWSTLPIEDLTKSDNEDITYPTVLEVQLNLPILKDGVQIFIAPNNGAVKVLANEFLSILPIFLYALGEQPLTEQNLEELRDLKETYPFNPVLFISSLENISLNGIDPELTESEQHRLQNRLYTNDSTSSKTDDDSIDFDRMNSLGLSWLDQLTNLGFLGMKESVEVDQLSWLGSGQYISDFVGSCRKTDQILYFIRGCLQTYLINASTYLNEVHTASLRKFILSAFDMARIIQITPKRIQYAQHKENELYANLMKIVHEKQQEITGLIQNIIQEMKNDVLLSNNDVYLYQNTMSNNNQRTEWSATVKAAISEVQRVVLGRLCEKVAKQLVNSVNCLRESFIGTLQRCLLSLEKTYERDTCLLASDALKQILSAAYNVELHNSSPFSIYSFLERLNLIFMSSSLQWSSTHTLDVAWRRKVTIEILNSLSATKLSKIILMQFGDKLESSHDSFQAALRSIENYYSGKLERTEEQRIALRKYHAPRLAKLALESTSMIDVVRYGKPHCAEEIGRGQYGIVFACDGWGGKAGPCAIKSVVPSDESHWNDLAMEFYYNRSIPDHKRIVKLRGSIIDHSYGGGFGFGSAVLLISDRLSRDLYCGIRAGLSWLERIQIALDVLEGIRYLHSQGLVHRDVKLKNVLLDIENRAKLTDFGFCITEVMMLGSIVGTPVHMAPELLSGHYDSSVDVYAFGILFWYLCAGHVRLPYTFEQFHNKELLWTSVKKALMIVGIRPERLPSFDDECWRLMEQCWSGEPSKRPLLGAIVPVLESIQQKAKRSKSLQEVSSDKLQESSTDSRNPALALAEPYNQRGTVVSPPPTKRRTMKVVKYHLFLTNLYIQMREL.

Positions 7–37 (QEFRRYLRNRNQLQHVLEETQQALELINLEN) form a coiled coil. The region spanning 632 to 894 (PHCAEEIGRG…PLLGAIVPVL (263 aa)) is the Protein kinase domain. ATP is bound by residues 638 to 646 (IGRGQYGIV) and K662. D760 acts as the Proton acceptor in catalysis. The interval 904 to 945 (SKSLQEVSSDKLQESSTDSRNPALALAEPYNQRGTVVSPPPT) is disordered.

Belongs to the protein kinase superfamily. Ser/Thr protein kinase family.

Its subcellular location is the cytoplasm. The catalysed reaction is L-seryl-[protein] + ATP = O-phospho-L-seryl-[protein] + ADP + H(+). It catalyses the reaction L-threonyl-[protein] + ATP = O-phospho-L-threonyl-[protein] + ADP + H(+). The enzyme catalyses L-tyrosyl-[protein] + ATP = O-phospho-L-tyrosyl-[protein] + ADP + H(+). In Apis mellifera (Honeybee), this protein is Dual serine/threonine and tyrosine protein kinase.